The sequence spans 442 residues: Histidinol dehydrogenase (442 aa).

NAD(+)-binding residues include tyrosine 142, glutamine 204, and asparagine 227. Serine 250, glutamine 272, and histidine 275 together coordinate substrate. The Zn(2+) site is built by glutamine 272 and histidine 275. Catalysis depends on proton acceptor residues glutamate 340 and histidine 341. Residues histidine 341, aspartate 374, glutamate 428, and histidine 433 each contribute to the substrate site. Aspartate 374 contributes to the Zn(2+) binding site. Residue histidine 433 coordinates Zn(2+).

The protein belongs to the histidinol dehydrogenase family. Zn(2+) is required as a cofactor.

It catalyses the reaction L-histidinol + 2 NAD(+) + H2O = L-histidine + 2 NADH + 3 H(+). It participates in amino-acid biosynthesis; L-histidine biosynthesis; L-histidine from 5-phospho-alpha-D-ribose 1-diphosphate: step 9/9. Its function is as follows. Catalyzes the sequential NAD-dependent oxidations of L-histidinol to L-histidinaldehyde and then to L-histidine. This chain is Histidinol dehydrogenase, found in Prochlorococcus marinus (strain MIT 9313).